The sequence spans 193 residues: Ion-translocating oxidoreductase complex subunit A (193 aa).

Transmembrane regions (helical) follow at residues 5–25 (LLLL…FLGL), 39–59 (IGMG…SYLI), 63–83 (ILAP…VIAV), 102–122 (VLGI…VALL), 134–154 (IIYG…FSAM), and 171–191 (SIAM…TGLV).

The protein belongs to the NqrDE/RnfAE family. As to quaternary structure, the complex is composed of six subunits: RnfA, RnfB, RnfC, RnfD, RnfE and RnfG.

It localises to the cell inner membrane. Functionally, part of a membrane-bound complex that couples electron transfer with translocation of ions across the membrane. The protein is Ion-translocating oxidoreductase complex subunit A of Aliivibrio salmonicida (strain LFI1238) (Vibrio salmonicida (strain LFI1238)).